The following is a 127-amino-acid chain: Small ribosomal subunit protein uS13 (127 aa).

The segment at 90–127 is disordered; that stretch reads RRHRQGLPVRGQRTRTNARTRRGRRVTVAGKKKAPSKK. Positions 101 to 127 are enriched in basic residues; that stretch reads QRTRTNARTRRGRRVTVAGKKKAPSKK.

This sequence belongs to the universal ribosomal protein uS13 family. Part of the 30S ribosomal subunit. Forms a loose heterodimer with protein S19. Forms two bridges to the 50S subunit in the 70S ribosome.

Functionally, located at the top of the head of the 30S subunit, it contacts several helices of the 16S rRNA. In the 70S ribosome it contacts the 23S rRNA (bridge B1a) and protein L5 of the 50S subunit (bridge B1b), connecting the 2 subunits; these bridges are implicated in subunit movement. Contacts the tRNAs in the A and P-sites. The protein is Small ribosomal subunit protein uS13 of Rippkaea orientalis (strain PCC 8801 / RF-1) (Cyanothece sp. (strain PCC 8801)).